We begin with the raw amino-acid sequence, 493 residues long: Glutamyl-tRNA(Gln) amidotransferase subunit A (493 aa).

Residues lysine 79 and serine 159 each act as charge relay system in the active site. The active-site Acyl-ester intermediate is serine 183.

The protein belongs to the amidase family. GatA subfamily. As to quaternary structure, heterotrimer of A, B and C subunits.

It carries out the reaction L-glutamyl-tRNA(Gln) + L-glutamine + ATP + H2O = L-glutaminyl-tRNA(Gln) + L-glutamate + ADP + phosphate + H(+). Allows the formation of correctly charged Gln-tRNA(Gln) through the transamidation of misacylated Glu-tRNA(Gln) in organisms which lack glutaminyl-tRNA synthetase. The reaction takes place in the presence of glutamine and ATP through an activated gamma-phospho-Glu-tRNA(Gln). The polypeptide is Glutamyl-tRNA(Gln) amidotransferase subunit A (Rhizobium etli (strain ATCC 51251 / DSM 11541 / JCM 21823 / NBRC 15573 / CFN 42)).